We begin with the raw amino-acid sequence, 295 residues long: 4-diphosphocytidyl-2-C-methyl-D-erythritol kinase (295 aa).

Lysine 25 is an active-site residue. 108 to 118 (PMGSGLGGGSS) is a binding site for ATP. Residue aspartate 150 is part of the active site.

The protein belongs to the GHMP kinase family. IspE subfamily.

It carries out the reaction 4-CDP-2-C-methyl-D-erythritol + ATP = 4-CDP-2-C-methyl-D-erythritol 2-phosphate + ADP + H(+). Its pathway is isoprenoid biosynthesis; isopentenyl diphosphate biosynthesis via DXP pathway; isopentenyl diphosphate from 1-deoxy-D-xylulose 5-phosphate: step 3/6. Catalyzes the phosphorylation of the position 2 hydroxy group of 4-diphosphocytidyl-2C-methyl-D-erythritol. The sequence is that of 4-diphosphocytidyl-2-C-methyl-D-erythritol kinase from Pasteurella multocida (strain Pm70).